A 393-amino-acid polypeptide reads, in one-letter code: Riboflavin biosynthesis protein RibBA (393 aa).

A DHBP synthase region spans residues 1–200; the sequence is MQFDTIELAI…IKSLVAFRKA (200 aa). Residues 27–28, Asp-32, 139–143, and Glu-163 each bind D-ribulose 5-phosphate; these read RE and RNGHT. A Mg(2+)-binding site is contributed by Glu-28. His-142 is a binding site for Mg(2+). A GTP cyclohydrolase II region spans residues 201–393; it reads VELNVNLKAK…TKKNKMGHLI (193 aa). 249-253 lines the GTP pocket; that stretch reads RMHSA. Cys-254, Cys-265, and Cys-267 together coordinate Zn(2+). GTP is bound by residues Gln-270, 291–293, and Thr-313; that span reads EGR. The active-site Proton acceptor; for GTP cyclohydrolase activity is the Asp-325. The active-site Nucleophile; for GTP cyclohydrolase activity is the Arg-327. GTP contacts are provided by Ser-348 and Lys-353.

It in the N-terminal section; belongs to the DHBP synthase family. In the C-terminal section; belongs to the GTP cyclohydrolase II family. Requires Mg(2+) as cofactor. Mn(2+) is required as a cofactor. It depends on Zn(2+) as a cofactor.

The catalysed reaction is D-ribulose 5-phosphate = (2S)-2-hydroxy-3-oxobutyl phosphate + formate + H(+). It carries out the reaction GTP + 4 H2O = 2,5-diamino-6-hydroxy-4-(5-phosphoribosylamino)-pyrimidine + formate + 2 phosphate + 3 H(+). It participates in cofactor biosynthesis; riboflavin biosynthesis; 2-hydroxy-3-oxobutyl phosphate from D-ribulose 5-phosphate: step 1/1. It functions in the pathway cofactor biosynthesis; riboflavin biosynthesis; 5-amino-6-(D-ribitylamino)uracil from GTP: step 1/4. Functionally, catalyzes the conversion of D-ribulose 5-phosphate to formate and 3,4-dihydroxy-2-butanone 4-phosphate. In terms of biological role, catalyzes the conversion of GTP to 2,5-diamino-6-ribosylamino-4(3H)-pyrimidinone 5'-phosphate (DARP), formate and pyrophosphate. The chain is Riboflavin biosynthesis protein RibBA from Staphylococcus epidermidis (strain ATCC 35984 / DSM 28319 / BCRC 17069 / CCUG 31568 / BM 3577 / RP62A).